The primary structure comprises 250 residues: Triosephosphate isomerase (250 aa).

9–11 (NWK) is a substrate binding site. The active-site Electrophile is the His-94. Glu-166 (proton acceptor) is an active-site residue. Residues Gly-172, Ser-212, and 233–234 (GG) contribute to the substrate site.

The protein belongs to the triosephosphate isomerase family. Homodimer.

Its subcellular location is the cytoplasm. It carries out the reaction D-glyceraldehyde 3-phosphate = dihydroxyacetone phosphate. It participates in carbohydrate biosynthesis; gluconeogenesis. It functions in the pathway carbohydrate degradation; glycolysis; D-glyceraldehyde 3-phosphate from glycerone phosphate: step 1/1. Involved in the gluconeogenesis. Catalyzes stereospecifically the conversion of dihydroxyacetone phosphate (DHAP) to D-glyceraldehyde-3-phosphate (G3P). This is Triosephosphate isomerase from Thermus thermophilus (strain ATCC 27634 / DSM 579 / HB8).